The primary structure comprises 103 residues: Pyrimidine/purine nucleoside phosphorylase (103 aa).

The protein belongs to the nucleoside phosphorylase PpnP family.

The enzyme catalyses a purine D-ribonucleoside + phosphate = a purine nucleobase + alpha-D-ribose 1-phosphate. It carries out the reaction adenosine + phosphate = alpha-D-ribose 1-phosphate + adenine. The catalysed reaction is cytidine + phosphate = cytosine + alpha-D-ribose 1-phosphate. It catalyses the reaction guanosine + phosphate = alpha-D-ribose 1-phosphate + guanine. The enzyme catalyses inosine + phosphate = alpha-D-ribose 1-phosphate + hypoxanthine. It carries out the reaction thymidine + phosphate = 2-deoxy-alpha-D-ribose 1-phosphate + thymine. The catalysed reaction is uridine + phosphate = alpha-D-ribose 1-phosphate + uracil. It catalyses the reaction xanthosine + phosphate = alpha-D-ribose 1-phosphate + xanthine. Functionally, catalyzes the phosphorolysis of diverse nucleosides, yielding D-ribose 1-phosphate and the respective free bases. Can use uridine, adenosine, guanosine, cytidine, thymidine, inosine and xanthosine as substrates. Also catalyzes the reverse reactions. The sequence is that of Pyrimidine/purine nucleoside phosphorylase from Citrifermentans bemidjiense (strain ATCC BAA-1014 / DSM 16622 / JCM 12645 / Bem) (Geobacter bemidjiensis).